A 387-amino-acid polypeptide reads, in one-letter code: Phosphoglycerate kinase (387 aa).

Residues 21-23, Arg-36, and 59-62 each bind substrate; these read DLN and HLGR. At Lys-84 the chain carries N6-acetyllysine. Residues Arg-113 and Arg-146 each contribute to the substrate site. Residues Lys-197, Glu-314, and 340–343 contribute to the ATP site; that span reads GGDT.

This sequence belongs to the phosphoglycerate kinase family. Monomer.

The protein localises to the cytoplasm. It catalyses the reaction (2R)-3-phosphoglycerate + ATP = (2R)-3-phospho-glyceroyl phosphate + ADP. It functions in the pathway carbohydrate degradation; glycolysis; pyruvate from D-glyceraldehyde 3-phosphate: step 2/5. This is Phosphoglycerate kinase from Escherichia coli O139:H28 (strain E24377A / ETEC).